Reading from the N-terminus, the 432-residue chain is Adenylosuccinate synthetase (432 aa).

Residues 13-19 (GDEGKGK) and 41-43 (GHT) each bind GTP. The active-site Proton acceptor is aspartate 14. Positions 14 and 41 each coordinate Mg(2+). IMP is bound by residues 14-17 (DEGK), 39-42 (NAGH), threonine 130, arginine 144, glutamine 225, threonine 240, and arginine 304. Histidine 42 serves as the catalytic Proton donor. 300–306 (AVTGRPR) lines the substrate pocket. GTP-binding positions include arginine 306, 332-334 (KLD), and 415-417 (STG).

This sequence belongs to the adenylosuccinate synthetase family. Homodimer. The cofactor is Mg(2+).

The protein resides in the cytoplasm. The enzyme catalyses IMP + L-aspartate + GTP = N(6)-(1,2-dicarboxyethyl)-AMP + GDP + phosphate + 2 H(+). Its pathway is purine metabolism; AMP biosynthesis via de novo pathway; AMP from IMP: step 1/2. In terms of biological role, plays an important role in the de novo pathway of purine nucleotide biosynthesis. Catalyzes the first committed step in the biosynthesis of AMP from IMP. In Pasteurella multocida (strain Pm70), this protein is Adenylosuccinate synthetase.